We begin with the raw amino-acid sequence, 181 residues long: Probable pyruvoyl-dependent arginine decarboxylase (181 aa).

The residue at position 43 (Ser43) is a Pyruvic acid (Ser).

This sequence belongs to the PdaD family. Pyruvate is required as a cofactor.

It catalyses the reaction L-arginine + H(+) = agmatine + CO2. The protein is Probable pyruvoyl-dependent arginine decarboxylase of Chlorobium limicola (strain DSM 245 / NBRC 103803 / 6330).